A 119-amino-acid polypeptide reads, in one-letter code: Protein yippee-like 3 (119 aa).

The 98-residue stretch at 19-116 (RRYSCAHCRA…IELNHMIKDN (98 aa)) folds into the Yippee domain. Zn(2+)-binding residues include cysteine 23, cysteine 26, cysteine 79, and cysteine 82.

It belongs to the yippee family. In terms of processing, probably ubiquitinated leading to its degradation by the proteasome.

Its subcellular location is the nucleus. The protein resides in the nucleolus. In terms of biological role, involved in proliferation and apoptosis in myeloid precursor cells. The protein is Protein yippee-like 3 (YPEL3) of Bos taurus (Bovine).